The following is a 1193-amino-acid chain: Chloride channel protein 2 (1193 aa).

At 1-168 (MVYFGDRQRD…WIWRHTVARL (168 aa)) the chain is on the cytoplasmic side. Residues 76 to 97 (SHAFYPCPPPAENARDSDSSDD) are disordered. Transmembrane regions (helical) follow at residues 169-204 (GEDWVFLALLGIIMALLSFIMDKGISICTNARIWLY) and 213-236 (VQYIAWVSLPVCLILFSAGFVHLI). The Selectivity filter part_1 motif lies at 242 to 246 (GSGIP). Residue Ser243 coordinates chloride. Positions 245-252 (IPEMKTIL) form an intramembrane region, helical. Helical transmembrane passes span 261 to 279 (LTFKTLVAKVIGLTATLGS) and 286 to 304 (EGPFVHIASIVAQLLSKLV). Positions 284-288 (GKEGP) match the Selectivity filter part_2 motif. 2 consecutive intramembrane regions (helical) follow at residues 320 to 332 (MLAAACAVGVGAC) and 336 to 344 (PVGGVLFSI). The next 5 membrane-spanning stretches (helical) occupy residues 356 to 373 (YWRGFFAAVCGATVFRLL), 402 to 430 (LFVFALIGLVCGLGGASYVWVHRRYVLFM), 439 to 458 (FLQKNRFLYPGFLALLVSSI), 511 to 530 (FGNLVIYTLFTFVVSIIAST), and 536 to 555 (GMFIPVFKIGAGFGRLVGEF). The short motif at 536–540 (GMFIP) is the Selectivity filter part_3 element. Phe538 contributes to the chloride binding site. Residues 576–590 (GGYAVVGAAAFSGSV) constitute an intramembrane region (helical). The note=Loop between two helices intramembrane region spans 591–592 (TH). An intramembrane region (helical) is located at residues 593–604 (TVSVAVIIFEMT). Residues 605–609 (GQITH) constitute an intramembrane region (note=Loop between two helices). The helical transmembrane segment at 610–626 (VVPVMIAVLVANAVAAL) threads the bilayer. At 627–1193 (LQPSIYDSII…KSNTENGNHA (567 aa)) the chain is on the cytoplasmic side. Residue Tyr632 coordinates chloride. A CBS 1 domain is found at 663–723 (MVRDVKYIWH…KMIEKHIGRE (61 aa)). Disordered regions lie at residues 848–884 (TLQDVQPDPETGSLSPAASNHEVEVPRTPSTPGVSKK), 1103–1122 (NSFVPPTRDEDADEKPAVEK), and 1159–1193 (IKHTDKGTVSLTMPPQESKQSPSADKSNTENGNHA). The CBS 2 domain occupies 1048–1105 (IDPSPFQLVERTSILKVHSLFSMVGINHAYVTKIGRLVGVVGLKELRKAIEDINSNSF). Positions 1165–1193 (GTVSLTMPPQESKQSPSADKSNTENGNHA) are enriched in polar residues.

Belongs to the chloride channel (TC 2.A.49) family. At embryonic stages 13-16, expressed in a subset of the midline cells of the midline primordium and in all of the midline glia. Expressed along the Z-line of the sarcomere in larval longitudinal muscles.

It localises to the membrane. In terms of biological role, voltage-gated chloride channel. Chloride channels have several functions including the regulation of cell volume; membrane potential stabilization, signal transduction and transepithelial transport. The polypeptide is Chloride channel protein 2 (ClC-a) (Drosophila melanogaster (Fruit fly)).